A 122-amino-acid polypeptide reads, in one-letter code: Large ribosomal subunit protein uL14 (122 aa).

This sequence belongs to the universal ribosomal protein uL14 family. Part of the 50S ribosomal subunit. Forms a cluster with proteins L3 and L19. In the 70S ribosome, L14 and L19 interact and together make contacts with the 16S rRNA in bridges B5 and B8.

In terms of biological role, binds to 23S rRNA. Forms part of two intersubunit bridges in the 70S ribosome. This chain is Large ribosomal subunit protein uL14, found in Limosilactobacillus fermentum (strain NBRC 3956 / LMG 18251) (Lactobacillus fermentum).